Consider the following 184-residue polypeptide: NADH-quinone oxidoreductase subunit B (184 aa).

4 residues coordinate [4Fe-4S] cluster: Cys-63, Cys-64, Cys-128, and Cys-158.

This sequence belongs to the complex I 20 kDa subunit family. As to quaternary structure, NDH-1 is composed of 14 different subunits. Subunits NuoB, C, D, E, F, and G constitute the peripheral sector of the complex. It depends on [4Fe-4S] cluster as a cofactor.

It is found in the cell inner membrane. It catalyses the reaction a quinone + NADH + 5 H(+)(in) = a quinol + NAD(+) + 4 H(+)(out). In terms of biological role, NDH-1 shuttles electrons from NADH, via FMN and iron-sulfur (Fe-S) centers, to quinones in the respiratory chain. The immediate electron acceptor for the enzyme in this species is believed to be ubiquinone. Couples the redox reaction to proton translocation (for every two electrons transferred, four hydrogen ions are translocated across the cytoplasmic membrane), and thus conserves the redox energy in a proton gradient. The sequence is that of NADH-quinone oxidoreductase subunit B from Xanthomonas axonopodis pv. citri (strain 306).